Reading from the N-terminus, the 389-residue chain is UDP-D-apiose/UDP-D-xylose synthase 1 (389 aa).

NAD(+)-binding residues include Phe-28, Ile-29, Asp-49, Asn-76, Ile-77, and Leu-96. UDP-alpha-D-glucuronate is bound by residues Tyr-105, Thr-139, Glu-141, Arg-182, and Tyr-185. Tyr-185 and Lys-189 together coordinate NAD(+). The Proton acceptor role is filled by Tyr-185. A UDP-alpha-D-glucuronate-binding site is contributed by Asn-214. Residues Trp-215 and Arg-235 each coordinate NAD(+). The UDP-alpha-D-glucuronate site is built by Lys-251, Val-253, Arg-260, Tyr-331, Tyr-335, Asp-337, and Arg-341.

The protein belongs to the NAD(P)-dependent epimerase/dehydratase family. In terms of assembly, homodimer and heterodimer with AXS2. Requires NAD(+) as cofactor. As to expression, widely expressed with stronger expression in leaves and stems, and lower levels in flowers, siliques, pistils, pollen and roots.

It localises to the cytoplasm. The catalysed reaction is UDP-alpha-D-glucuronate + H(+) = UDP-alpha-D-xylose + CO2. It carries out the reaction UDP-alpha-D-glucuronate + H(+) = UDP-alpha-D-apiose + CO2. Inhibited by UDP-D-galacturonate. Together with AXS2, catalyzes the conversion of UDP-D-glucuronate into a mixture of UDP-D-apiose (UDP-Api) as the main product and UDP-D-xylose to a lesser extent, via a cycle of oxidation and reduction. D-Apiose (3-C-hydroxymethyl-d-erythrose) is the only plant cell wall monosaccharide with a branched carbon skeleton and is found in rhamnogalacturonan II (RG-II), apiogalacturonan, and several apioglycosides. The protein is UDP-D-apiose/UDP-D-xylose synthase 1 of Arabidopsis thaliana (Mouse-ear cress).